The sequence spans 208 residues: Small ribosomal subunit protein eS8 (208 aa).

It belongs to the eukaryotic ribosomal protein eS8 family. Component of the small ribosomal subunit. Identified in a IGF2BP1-dependent mRNP granule complex containing untranslated mRNAs. Part of the small subunit (SSU) processome, composed of more than 70 proteins and the RNA chaperone small nucleolar RNA (snoRNA) U3.

The protein resides in the cytoplasm. The protein localises to the membrane. It localises to the nucleus. It is found in the nucleolus. Component of the small ribosomal subunit. The ribosome is a large ribonucleoprotein complex responsible for the synthesis of proteins in the cell. Part of the small subunit (SSU) processome, first precursor of the small eukaryotic ribosomal subunit. During the assembly of the SSU processome in the nucleolus, many ribosome biogenesis factors, an RNA chaperone and ribosomal proteins associate with the nascent pre-rRNA and work in concert to generate RNA folding, modifications, rearrangements and cleavage as well as targeted degradation of pre-ribosomal RNA by the RNA exosome. This chain is Small ribosomal subunit protein eS8 (rps-8), found in Caenorhabditis elegans.